Reading from the N-terminus, the 309-residue chain is Homoserine kinase (309 aa).

Position 91–101 (91–101 (PIGSGLGSSAC)) interacts with ATP.

The protein belongs to the GHMP kinase family. Homoserine kinase subfamily.

The protein localises to the cytoplasm. It carries out the reaction L-homoserine + ATP = O-phospho-L-homoserine + ADP + H(+). It functions in the pathway amino-acid biosynthesis; L-threonine biosynthesis; L-threonine from L-aspartate: step 4/5. Functionally, catalyzes the ATP-dependent phosphorylation of L-homoserine to L-homoserine phosphate. This is Homoserine kinase from Yersinia pseudotuberculosis serotype O:1b (strain IP 31758).